A 1213-amino-acid chain; its full sequence is Oligopeptidase PhomG' (1213 aa).

His447 is a binding site for Zn(2+). Residue Glu448 is part of the active site. 2 residues coordinate Zn(2+): His451 and His454.

This sequence belongs to the peptidase M3 family. In terms of assembly, monomer. Zn(2+) serves as cofactor.

It functions in the pathway mycotoxin biosynthesis. Oligopeptidase; part of the gene cluster that mediates the biosynthesis of the phomopsins, a group of hexapeptide mycotoxins which infects lupins and causes lupinosis disease in livestock. Within the pathway, phomG and phomG' are probably involved in the processing of the phomA and phomA' precursors. The pathway starts with the processing of the precursor phomA by several endopeptidases including kexin proteases as well as the cluster-specific S41 family peptidase phomP1 and the oligopeptidase phomG to produce 10 identical copies of the hexapeptide Tyr-Val-Ile-Pro-Ile-Asp. After being excised from the precursor peptide, the core peptides are cyclized and modified post-translationally by enzymes encoded within the gene cluster. The timing and order of proteolysis of the phomA precursor and PTMs are still unknown. Two tyrosinase-like enzymes, phomQ1 and phomQ2, catalyze the chlorination and hydroxylation of Tyr, respectively. PhomYb, is proposed to be involved in the construction of the macrocyclic structure. The other 4 ustYa family proteins may be involved in PTMs that generate the unique structure of phomopsin A. PhomYa is required for the hydroxylation of C-beta of Tyr. PhomYc, phomYd, and phomYe are responsible for the biosynthesis of 2,3-dehydroisoleucine (dIle), 2,3-dehydroaspartic acid (dAsp), and 3,4-dehydroproline (dPro), respectively. While dIle formation by phomYc is indispensable for the installation of dAsp by phomYd, the order of the other PTMs have not been elucidated yet. Most of the biosynthetic enzymes likely have broad substrate specificity, and thus, there might be a metabolic grid from a precursor to phomopsin A. The enzyme(s) responsible for the biosynthesis of 3,4-dehydrovaline (dVal) have also not been identified yet. Finally, phomM acts as an S-adenosylmethionine-dependent alpha-N-methyltransferase that catalyzes two successive N-methylation reactions, converting N-desmethyl-phomopsin A to phomopsin A and phomopsin A further to an N,N-dimethylated congener called phomopsin E. In Diaporthe leptostromiformis (Lupinosis disease fungus), this protein is Oligopeptidase PhomG'.